The chain runs to 252 residues: MFAEIITVGDELLTGNTVNSNSAHIAKKLTERGYLVKRITTVGDDVEDIRSVILESLNRKPDVLIISGGLGPTHDDVTMVAVAKALGKELVLCEKCLEEIKEFYERLYREGLIDDPTLNDARKKMAYLPKGAIPLKNSVGAAPGAYIEYRGTKIFVLPGMPREMKAMLEEEVLPRIGSKKFVQKKYLAEITDESKLAPILEETIKIFDVKIHSSPKGFGKFIGIIIFAQDEDTIKKAVEFMKSKGIEFREGW.

The protein belongs to the CinA family.

This chain is Protein PF0476, found in Pyrococcus furiosus (strain ATCC 43587 / DSM 3638 / JCM 8422 / Vc1).